A 137-amino-acid polypeptide reads, in one-letter code: uncharacterized protein (137 aa).

Positions 67-87 are disordered; it reads KSERQHQRVHHELPHDKPRQS. The span at 70–85 shows a compositional bias: basic and acidic residues; sequence RQHQRVHHELPHDKPR.

This is an uncharacterized protein from Human cytomegalovirus (strain AD169) (HHV-5).